Reading from the N-terminus, the 292-residue chain is 2-hydroxy-3-oxopropionate reductase (292 aa).

NAD(+) is bound by residues 4–18 and Ser-94; that span reads GFIG…MAIN. Residue Lys-169 is part of the active site. Lys-237 lines the NAD(+) pocket.

Belongs to the HIBADH-related family.

It carries out the reaction (R)-glycerate + NADP(+) = 2-hydroxy-3-oxopropanoate + NADPH + H(+). The catalysed reaction is (R)-glycerate + NAD(+) = 2-hydroxy-3-oxopropanoate + NADH + H(+). Its pathway is organic acid metabolism; glycolate degradation; 3-phospho-D-glycerate from glycolate: step 3/4. This is 2-hydroxy-3-oxopropionate reductase (glxR) from Escherichia coli (strain K12).